Reading from the N-terminus, the 187-residue chain is Ribosome-recycling factor (187 aa).

This sequence belongs to the RRF family.

It is found in the cytoplasm. In terms of biological role, responsible for the release of ribosomes from messenger RNA at the termination of protein biosynthesis. May increase the efficiency of translation by recycling ribosomes from one round of translation to another. This chain is Ribosome-recycling factor, found in Rhodopseudomonas palustris (strain BisB5).